The primary structure comprises 265 residues: Gamma-secretase subunit APH-1A (265 aa).

Residues 1–2 lie on the Lumenal side of the membrane; it reads MG. Residues 3-23 form a helical membrane-spanning segment; sequence AAVFFGCTFVAFGPAFALFLI. Residues 24–31 are Cytoplasmic-facing; that stretch reads TVAGDPLR. The chain crosses the membrane as a helical span at residues 32–52; that stretch reads VIILVAGAFFWLVSLLLASVV. Topologically, residues 53-68 are lumenal; sequence WFILVHVTDRSDARLQ. The chain crosses the membrane as a helical span at residues 69-89; sequence YGLLIFGAAVSVLLQEVFRFA. At 90–118 the chain is on the cytoplasmic side; that stretch reads YYKLLKKADEGLASLSEDGRSPISIRQMA. Residues 119–139 traverse the membrane as a helical segment; that stretch reads YVSGLSFGIISGVFSVINILA. Residues 140–158 lie on the Lumenal side of the membrane; that stretch reads DALGPGVVGIHGDSPYYFL. The chain crosses the membrane as a helical span at residues 159–179; that stretch reads TSAFLTAAIILLHTFWGVVFF. The Cytoplasmic portion of the chain corresponds to 180 to 186; the sequence is DACERRR. A helical transmembrane segment spans residues 187–207; that stretch reads YWALGLVVGSHLLTSGLTFLN. Over 208–213 the chain is Lumenal; it reads PWYEAS. A helical transmembrane segment spans residues 214 to 234; it reads LLPIYAVTVSMGLWAFITAGG. Residues 235-265 lie on the Cytoplasmic side of the membrane; the sequence is SLRSIQRSLLCRRQEDSRVMVYSALRIPPED.

Belongs to the APH-1 family. In terms of assembly, the functional gamma-secretase complex is composed of at least four polypeptides: a presenilin homodimer (PSEN1 or PSEN2), nicastrin (NCSTN), APH1 (APH1A or APH1B) and PSENEN/PEN2. As to expression, widely expressed. Expressed in leukocytes, lung, placenta, small intestine, liver, kidney, spleen thymus, skeletal muscle, heart and brain. Isoform 1 and isoform 2 are nearly expressed at the same level.

The protein resides in the endoplasmic reticulum membrane. It localises to the golgi apparatus. It is found in the golgi stack membrane. Non-catalytic subunit of the gamma-secretase complex, an endoprotease complex that catalyzes the intramembrane cleavage of integral membrane proteins such as Notch receptors and APP (amyloid-beta precursor protein). Required for normal gamma-secretase assembly. The gamma-secretase complex plays a role in Notch and Wnt signaling cascades and regulation of downstream processes via its role in processing key regulatory proteins, and by regulating cytosolic CTNNB1 levels. The protein is Gamma-secretase subunit APH-1A (APH1A) of Homo sapiens (Human).